The following is a 462-amino-acid chain: Cytochrome b558/566 subunit A (462 aa).

Over 1 to 8 the chain is Cytoplasmic; sequence MSLKIKSK. Residues 9-26 traverse the membrane as a helical segment; the sequence is ITIGVLLIIFLLSIIFTL. At 27–431 the chain is on the extracellular side; it reads ENVSLAQTSP…TSTSPVTTIS (405 aa). Residues asparagine 28, asparagine 65, asparagine 91, asparagine 121, asparagine 144, asparagine 164, asparagine 174, asparagine 183, asparagine 211, asparagine 278, asparagine 279, asparagine 293, asparagine 316, asparagine 339, asparagine 353, and asparagine 376 are each glycosylated (N-linked (GlcNAc...) asparagine). A helical membrane pass occupies residues 432–456; it reads SAIPPVTLYVTIIGVVVALVALVIL. Residues 457 to 462 lie on the Cytoplasmic side of the membrane; it reads YVVFRR.

It depends on heme as a cofactor. In terms of processing, N-glycosylated on at least seven Asn residues by identical hexasaccharide units composed of Man, GlcNAc, Glc and 6-deoxy-6-sulfoglucose residues in the molar ration of 2:2:1:1. Post-translationally, O-glycosylated on probably as many as 35 positions by single Man residues.

Its subcellular location is the cell membrane. In terms of biological role, monoheme cytochrome whose physiological function is not yet clear. This chain is Cytochrome b558/566 subunit A (cbsA), found in Sulfolobus acidocaldarius (strain ATCC 33909 / DSM 639 / JCM 8929 / NBRC 15157 / NCIMB 11770).